Here is a 322-residue protein sequence, read N- to C-terminus: NADH-cytochrome b5 reductase 2 (322 aa).

Residues 31-48 (LAPIYAAVGITGVGVGLY) traverse the membrane as a helical segment. One can recognise an FAD-binding FR-type domain in the interval 72-176 (QGWFDLKLSE…KGPIVKYPWE (105 aa)). 179 to 214 (KHNHICLIAGGTGITPMYQLAREIFKNPEDQTKVTL) lines the FAD pocket.

The protein belongs to the flavoprotein pyridine nucleotide cytochrome reductase family. It depends on FAD as a cofactor.

It localises to the mitochondrion outer membrane. It catalyses the reaction 2 Fe(III)-[cytochrome b5] + NADH = 2 Fe(II)-[cytochrome b5] + NAD(+) + H(+). May mediate the reduction of outer membrane cytochrome b5. The chain is NADH-cytochrome b5 reductase 2 (mcr1) from Aspergillus niger (strain ATCC MYA-4892 / CBS 513.88 / FGSC A1513).